Reading from the N-terminus, the 290-residue chain is uncharacterized protein (290 aa).

The protein localises to the cytoplasm. This is an uncharacterized protein from Saccharomyces cerevisiae (strain ATCC 204508 / S288c) (Baker's yeast).